The following is a 469-amino-acid chain: Receptor-type adenylate cyclase (469 aa).

Over 1 to 59 the chain is Extracellular; the sequence is VDTAEKLSKNGCASNYGATQISVWSMARALNASIPPLTNPMTPSMTFRNSNAGRISGVA. N-linked (GlcNAc...) asparagine glycosylation is present at Asn31. Residues 60-80 form a helical membrane-spanning segment; it reads LVGVIIGGALALFLVVALGVV. Topologically, residues 81 to 469 are cytoplasmic; that stretch reads PYFFLHNTRD…IDLENDSTTS (389 aa). Residues 103-257 enclose the Guanylate cyclase domain; it reads TLIFTDIESS…RTSNMAARTE (155 aa). Mg(2+) contacts are provided by Asp108 and Asp151.

This sequence belongs to the adenylyl cyclase class-3 family. The cofactor is Mg(2+).

It localises to the cell membrane. The catalysed reaction is ATP = 3',5'-cyclic AMP + diphosphate. Could act as a receptor for an unknown ligand. This chain is Receptor-type adenylate cyclase (ESAG4C), found in Trypanosoma equiperdum.